A 2293-amino-acid polypeptide reads, in one-letter code: Protein Ycf2 B (2293 aa).

1647 to 1654 (GSIGTGRS) lines the ATP pocket.

Belongs to the Ycf2 family.

The protein localises to the plastid. It localises to the chloroplast stroma. In terms of biological role, probable ATPase of unknown function. Its presence in a non-photosynthetic plant (Epifagus virginiana) and experiments in tobacco indicate that it has an essential function which is probably not related to photosynthesis. In Crucihimalaya wallichii (Rock-cress), this protein is Protein Ycf2 B.